Consider the following 105-residue polypeptide: Small ribosomal subunit protein uS10 (105 aa).

It belongs to the universal ribosomal protein uS10 family. In terms of assembly, part of the 30S ribosomal subunit.

Functionally, involved in the binding of tRNA to the ribosomes. This chain is Small ribosomal subunit protein uS10, found in Rickettsia felis (strain ATCC VR-1525 / URRWXCal2) (Rickettsia azadi).